The primary structure comprises 123 residues: uncharacterized protein (123 aa).

One can recognise a Rhodanese domain in the interval 17–117; the sequence is SNDNAFLVDV…NNQDKGWKQN (101 aa).

This is an uncharacterized protein from Rickettsia rickettsii.